A 750-amino-acid chain; its full sequence is Photosystem I P700 chlorophyll a apoprotein A1 (750 aa).

8 helical membrane-spanning segments follow: residues 70 to 93, 156 to 179, 195 to 219, 291 to 309, 346 to 369, 385 to 411, 433 to 455, and 531 to 549; these read VFSA…FHGA, LYCT…FHYH, LNHH…HVSL, IAHH…GHMY, WHAQ…HHMY, LSLF…IFMV, AIIS…LYIH, and FLVH…LILL. [4Fe-4S] cluster contacts are provided by C573 and C582. Transmembrane regions (helical) follow at residues 589–610 and 664–686; these read HVFL…HFSW and LSAY…MFLF. Position 675 (H675) interacts with chlorophyll a'. Residues M683 and Y691 each contribute to the chlorophyll a site. A phylloquinone-binding site is contributed by W692. A helical transmembrane segment spans residues 724 to 744; the sequence is AVGVTHYLLGGIATTWAFFLA.

It belongs to the PsaA/PsaB family. In terms of assembly, the PsaA/B heterodimer binds the P700 chlorophyll special pair and subsequent electron acceptors. PSI consists of a core antenna complex that captures photons, and an electron transfer chain that converts photonic excitation into a charge separation. The eukaryotic PSI reaction center is composed of at least 11 subunits. P700 is a chlorophyll a/chlorophyll a' dimer, A0 is one or more chlorophyll a, A1 is one or both phylloquinones and FX is a shared 4Fe-4S iron-sulfur center. serves as cofactor.

It is found in the plastid. The protein localises to the chloroplast thylakoid membrane. The enzyme catalyses reduced [plastocyanin] + hnu + oxidized [2Fe-2S]-[ferredoxin] = oxidized [plastocyanin] + reduced [2Fe-2S]-[ferredoxin]. Functionally, psaA and PsaB bind P700, the primary electron donor of photosystem I (PSI), as well as the electron acceptors A0, A1 and FX. PSI is a plastocyanin-ferredoxin oxidoreductase, converting photonic excitation into a charge separation, which transfers an electron from the donor P700 chlorophyll pair to the spectroscopically characterized acceptors A0, A1, FX, FA and FB in turn. Oxidized P700 is reduced on the lumenal side of the thylakoid membrane by plastocyanin. The sequence is that of Photosystem I P700 chlorophyll a apoprotein A1 from Morus indica (Mulberry).